Reading from the N-terminus, the 343-residue chain is 3-dehydroquinate synthase (343 aa).

NAD(+) contacts are provided by residues 61–66, 95–99, 119–120, K132, K141, and 159–162; these read SGEKYK, GVISD, TT, and FLKT. The Zn(2+) site is built by E174, H231, and H248.

The protein belongs to the sugar phosphate cyclases superfamily. Dehydroquinate synthase family. It depends on Co(2+) as a cofactor. Requires Zn(2+) as cofactor. The cofactor is NAD(+).

Its subcellular location is the cytoplasm. The catalysed reaction is 7-phospho-2-dehydro-3-deoxy-D-arabino-heptonate = 3-dehydroquinate + phosphate. It participates in metabolic intermediate biosynthesis; chorismate biosynthesis; chorismate from D-erythrose 4-phosphate and phosphoenolpyruvate: step 2/7. Functionally, catalyzes the conversion of 3-deoxy-D-arabino-heptulosonate 7-phosphate (DAHP) to dehydroquinate (DHQ). The sequence is that of 3-dehydroquinate synthase from Helicobacter pylori (strain P12).